Consider the following 474-residue polypeptide: Bifunctional protein HldE (474 aa).

The ribokinase stretch occupies residues M1 to E318. N194–E197 is an ATP binding site. Residue D263 is part of the active site. A cytidylyltransferase region spans residues F343–G474.

In the N-terminal section; belongs to the carbohydrate kinase PfkB family. It in the C-terminal section; belongs to the cytidylyltransferase family. Homodimer.

It carries out the reaction D-glycero-beta-D-manno-heptose 7-phosphate + ATP = D-glycero-beta-D-manno-heptose 1,7-bisphosphate + ADP + H(+). The catalysed reaction is D-glycero-beta-D-manno-heptose 1-phosphate + ATP + H(+) = ADP-D-glycero-beta-D-manno-heptose + diphosphate. The protein operates within nucleotide-sugar biosynthesis; ADP-L-glycero-beta-D-manno-heptose biosynthesis; ADP-L-glycero-beta-D-manno-heptose from D-glycero-beta-D-manno-heptose 7-phosphate: step 1/4. Its pathway is nucleotide-sugar biosynthesis; ADP-L-glycero-beta-D-manno-heptose biosynthesis; ADP-L-glycero-beta-D-manno-heptose from D-glycero-beta-D-manno-heptose 7-phosphate: step 3/4. It functions in the pathway bacterial outer membrane biogenesis; LPS core biosynthesis. In terms of biological role, catalyzes the phosphorylation of D-glycero-D-manno-heptose 7-phosphate at the C-1 position to selectively form D-glycero-beta-D-manno-heptose-1,7-bisphosphate. Functionally, catalyzes the ADP transfer from ATP to D-glycero-beta-D-manno-heptose 1-phosphate, yielding ADP-D-glycero-beta-D-manno-heptose. This is Bifunctional protein HldE from Pseudomonas aeruginosa (strain ATCC 15692 / DSM 22644 / CIP 104116 / JCM 14847 / LMG 12228 / 1C / PRS 101 / PAO1).